The primary structure comprises 704 residues: Cystathionine beta-synthase cbs-1 (704 aa).

Pyridoxal 5'-phosphate contacts are provided by residues N454, 562–566 (GTGGT), and S652.

It belongs to the cysteine synthase/cystathionine beta-synthase family. In terms of assembly, monomer. As to quaternary structure, does not bind pyridoxal 5'-phosphate, PLP; which may explain why this isoform has virtually undetectable catalytic activity. Pyridoxal 5'-phosphate is required as a cofactor.

It is found in the cytoplasm. The enzyme catalyses L-homocysteine + L-serine = L,L-cystathionine + H2O. It functions in the pathway amino-acid biosynthesis; L-cysteine biosynthesis; L-cysteine from L-homocysteine and L-serine: step 1/2. Its function is as follows. Hydro-lyase catalyzing the first step of the transsulfuration pathway, where the hydroxyl group of L-serine is displaced by L-homocysteine in a beta-replacement reaction to form L-cystathionine, the precursor of L-cysteine. Plays a role in maintaining homocysteine homeostasis. Involved in cold-induced somatic longevity mediated by prostaglandin E2 (PGE2) signals from adult germ cells, perhaps acting via a role in the production of hydrogen sulfide (H2S). Required for normal development. This chain is Cystathionine beta-synthase cbs-1, found in Caenorhabditis elegans.